Consider the following 422-residue polypeptide: Choline monooxygenase, chloroplastic (422 aa).

The transit peptide at 1 to 47 directs the protein to the chloroplast; it reads MMTTLTATVPEFLPPSLKSTRGYFNSHSEFGVSISKFSRRRFHNPTR. The Rieske domain occupies 96-203; sequence WQAVGYSDQI…VAVWGPFVLL (108 aa). [2Fe-2S] cluster is bound by residues C138, H140, C157, and H160. Fe cation is bound by residues H269 and H274.

This sequence belongs to the choline monooxygenase family. Requires [2Fe-2S] cluster as cofactor. It depends on Fe cation as a cofactor. The cofactor is Mg(2+).

Its subcellular location is the plastid. The protein localises to the chloroplast stroma. It carries out the reaction choline + 2 reduced [2Fe-2S]-[ferredoxin] + O2 + 2 H(+) = betaine aldehyde hydrate + 2 oxidized [2Fe-2S]-[ferredoxin] + H2O. Its pathway is amine and polyamine biosynthesis; betaine biosynthesis via choline pathway; betaine aldehyde from choline (monooxygenase route): step 1/1. Its function is as follows. Catalyzes the first step of the osmoprotectant glycine betaine synthesis. This chain is Choline monooxygenase, chloroplastic, found in Arabidopsis thaliana (Mouse-ear cress).